The primary structure comprises 522 residues: Glutamate--cysteine ligase (522 aa).

The protein belongs to the glutamate--cysteine ligase type 1 family. Type 1 subfamily.

It catalyses the reaction L-cysteine + L-glutamate + ATP = gamma-L-glutamyl-L-cysteine + ADP + phosphate + H(+). It functions in the pathway sulfur metabolism; glutathione biosynthesis; glutathione from L-cysteine and L-glutamate: step 1/2. This is Glutamate--cysteine ligase from Shewanella halifaxensis (strain HAW-EB4).